Reading from the N-terminus, the 306-residue chain is Acetyl-coenzyme A carboxylase carboxyl transferase subunit beta (306 aa).

Residues 27–296 (LWHKCPSCEA…PRFVAPVIEP (270 aa)) form the CoA carboxyltransferase N-terminal domain. Residues C31, C34, C50, and C53 each coordinate Zn(2+). The C4-type zinc-finger motif lies at 31–53 (CPSCEAVLYRPELEKTLDVCPKC).

The protein belongs to the AccD/PCCB family. In terms of assembly, acetyl-CoA carboxylase is a heterohexamer composed of biotin carboxyl carrier protein (AccB), biotin carboxylase (AccC) and two subunits each of ACCase subunit alpha (AccA) and ACCase subunit beta (AccD). The cofactor is Zn(2+).

The protein localises to the cytoplasm. It catalyses the reaction N(6)-carboxybiotinyl-L-lysyl-[protein] + acetyl-CoA = N(6)-biotinyl-L-lysyl-[protein] + malonyl-CoA. It participates in lipid metabolism; malonyl-CoA biosynthesis; malonyl-CoA from acetyl-CoA: step 1/1. Functionally, component of the acetyl coenzyme A carboxylase (ACC) complex. Biotin carboxylase (BC) catalyzes the carboxylation of biotin on its carrier protein (BCCP) and then the CO(2) group is transferred by the transcarboxylase to acetyl-CoA to form malonyl-CoA. This chain is Acetyl-coenzyme A carboxylase carboxyl transferase subunit beta, found in Pseudomonas savastanoi pv. phaseolicola (strain 1448A / Race 6) (Pseudomonas syringae pv. phaseolicola (strain 1448A / Race 6)).